A 546-amino-acid chain; its full sequence is MKNNWIDVLDESLVKDFYNNQTSEEQQEGLNTTLSFGTAGIRGKFGLGEGRLNKFTVSKVALGFAHYLTSSIAHPVVVIHYDTRHLSPEFAQIIANILASLDIKVYLADTYRTTPDLSFAVRYLQADAGVMITASHNPKDYNGIKVYGEDGAQLSTDDSARLSTYIDKLGHPLHINLPSLTTEQQSLIHSVPSEVREDYFKNVQDLVGTIPQSDLKVVFTSLHGTSVPVVPDILSSLNFNQFELVASQCEPDSDFSSVASANPEDHKAFDQSIELANLIDADLLIGTDPDADRLGIVERDAEGNIYYYNGNQIGALLLNYRIKQTEGLPNRIMFQSIVSGGLAKSLAQYHNVNFKEVLTGFKYIAAEIRHLSPEQNFIFGYEESYGFLARPFVRDKDAIQIVPLMIKYAAELKNEGRMLKDELEDITRNVGNFNDKLFSHTFEGTQGKAKIENIMTQFRSETPTEMCGLKVIAIEDFETGKKTDLQNDEVSDITLPKANVIKIYFNEGFIALRPSGTEPKIKLYVSLSCDHFDVIAQKINDAIFNS.

Ser-135 functions as the Phosphoserine intermediate in the catalytic mechanism. 4 residues coordinate Mg(2+): Ser-135, Asp-288, Asp-290, and Asp-292.

Belongs to the phosphohexose mutase family. Mg(2+) is required as a cofactor.

It catalyses the reaction alpha-D-glucose 1-phosphate = alpha-D-glucose 6-phosphate. It functions in the pathway glycolipid metabolism; diglucosyl-diacylglycerol biosynthesis. Functionally, catalyzes the interconversion between glucose-6-phosphate and alpha-glucose-1-phosphate. This is the first step in the biosynthesis of diglucosyl-diacylglycerol (Glc2-DAG), i.e. a glycolipid found in the membrane, which is also used as a membrane anchor for lipoteichoic acid (LTA). The sequence is that of Phosphoglucomutase (pgcA) from Staphylococcus epidermidis (strain ATCC 12228 / FDA PCI 1200).